We begin with the raw amino-acid sequence, 205 residues long: Bcl2-associated agonist of cell death (205 aa).

Positions 1-139 (MGTPKQPSLA…PFRGRSRSAP (139 aa)) are disordered. Ser67 carries the post-translational modification Phosphoserine. Over residues 85–98 (IVQQQPGQAANNSH) the composition is skewed to polar residues. Ser113 carries the post-translational modification Phosphoserine. The segment covering 118-128 (TEEDEGMEEEL) has biased composition (acidic residues). Ser129 carries the post-translational modification Phosphoserine. 2 positions are modified to asymmetric dimethylarginine; by PRMT1: Arg132 and Arg134. A Phosphoserine modification is found at Ser135. Phosphoserine; by PKA, PKB, PAK1, RPS6KA1, RPS6KB1 and PKC/PRKCQ is present on Ser137. Positions 148-162 (YGRELRRMSDEFEGS) match the BH3 motif. 2 positions are modified to phosphoserine: Ser156 and Ser171. The interval 161-180 (GSFKGLPRPKSAGTATQMRQ) is disordered.

It belongs to the Bcl-2 family. Forms heterodimers with the anti-apoptotic proteins, Bcl-X(L), Bcl-2 and Bcl-W. Also binds protein S100A10. The Ser-113/Ser-137 phosphorylated form binds 14-3-3 proteins. Interacts with AKT1 and PIM3. Interacts with HIF3A (via C-terminus domain); the interaction reduces the binding between BAD and BAX. Interacts (via BH3 domain) with NOL3 (via CARD domain); preventing the association of BAD with BCL2. Interacts with GIMAP3/IAN4 and GIMAP5/IAN5. Phosphorylated at one or more of Ser-113, Ser-137, Ser-156 and Ser-171 in response to survival stimuli, which blocks its pro-apoptotic activity. Phosphorylation on Ser-137 or Ser-113 promotes heterodimerization with 14-3-3 proteins. This interaction then facilitates the phosphorylation at Ser-156, a site within the BH3 motif, leading to the release of Bcl-X(L) and the promotion of cell survival. Ser-137 is the major site of AKT/PKB phosphorylation, Ser-156 the major site of protein kinase A (CAPK) phosphorylation. Post-translationally, methylation at Arg-132 and Arg-134 by PRMT1 inhibits Akt-mediated phosphorylation at Ser-137. In terms of tissue distribution, expressed in all tissues tested, including brain, liver, spleen and heart. In the brain, restricted to epithelial cells of the choroid plexus. Isoform alpha is the more abundant form.

It is found in the mitochondrion outer membrane. Its subcellular location is the cytoplasm. In terms of biological role, promotes cell death. Successfully competes for the binding to Bcl-X(L), Bcl-2 and Bcl-W, thereby affecting the level of heterodimerization of these proteins with BAX. Can reverse the death repressor activity of Bcl-X(L), but not that of Bcl-2. Appears to act as a link between growth factor receptor signaling and the apoptotic pathways. This is Bcl2-associated agonist of cell death (Bad) from Rattus norvegicus (Rat).